The following is a 568-amino-acid chain: Probable WRKY transcription factor 34 (568 aa).

The segment at residues 172-236 is a DNA-binding region (WRKY 1); sequence ACCAPADDGY…YTGDHIHSKP (65 aa). Residues Cys203, Cys208, His231, and His233 each contribute to the Zn(2+) site. Disordered regions lie at residues 230–252 and 337–360; these read DHIH…TGQD and KRRK…EPRV. The WRKY 2 DNA-binding region spans 366–431; that stretch reads SDIDILDDGY…YIGKHTHVVP (66 aa). Residues Cys397, Cys402, His426, and His428 each coordinate Zn(2+).

The protein belongs to the WRKY group I family.

The protein localises to the nucleus. Its function is as follows. Transcription factor. Interacts specifically with the W box (5'-(T)TGAC[CT]-3'), a frequently occurring elicitor-responsive cis-acting element. The protein is Probable WRKY transcription factor 34 (WRKY34) of Arabidopsis thaliana (Mouse-ear cress).